Here is a 344-residue protein sequence, read N- to C-terminus: Dihydroorotase (344 aa).

Zn(2+)-binding residues include histidine 13 and histidine 15. Residues 15 to 17 (HVR) and asparagine 41 each bind substrate. The Zn(2+) site is built by lysine 99, histidine 136, and histidine 174. At lysine 99 the chain carries N6-carboxylysine. A substrate-binding site is contributed by histidine 136. Position 219 (leucine 219) interacts with substrate. Aspartate 247 is a Zn(2+) binding site. The active site involves aspartate 247. The substrate site is built by histidine 251 and alanine 263.

It belongs to the metallo-dependent hydrolases superfamily. DHOase family. Class II DHOase subfamily. As to quaternary structure, homodimer. Zn(2+) serves as cofactor.

It carries out the reaction (S)-dihydroorotate + H2O = N-carbamoyl-L-aspartate + H(+). It functions in the pathway pyrimidine metabolism; UMP biosynthesis via de novo pathway; (S)-dihydroorotate from bicarbonate: step 3/3. Functionally, catalyzes the reversible cyclization of carbamoyl aspartate to dihydroorotate. The chain is Dihydroorotase from Aromatoleum aromaticum (strain DSM 19018 / LMG 30748 / EbN1) (Azoarcus sp. (strain EbN1)).